Here is a 253-residue protein sequence, read N- to C-terminus: Endonuclease NucS (253 aa).

The interval 63–91 (IDDPDTDFTDGSSVGNSEEQGTDGSAHTA) is disordered. Residues 71–87 (TDGSSVGNSEEQGTDGS) are compositionally biased toward polar residues.

This sequence belongs to the NucS endonuclease family.

It localises to the cytoplasm. Cleaves both 3' and 5' ssDNA extremities of branched DNA structures. The chain is Endonuclease NucS from Corynebacterium kroppenstedtii (strain DSM 44385 / JCM 11950 / CIP 105744 / CCUG 35717).